A 165-amino-acid chain; its full sequence is Destrin (165 aa).

A2 is modified (N-acetylalanine). An ADF-H domain is found at G4–G153. Residues K30–K34 carry the Nuclear localization signal motif.

The protein belongs to the actin-binding proteins ADF family.

Its function is as follows. Actin-depolymerizing protein. Severs actin filaments (F-actin) and binds to actin monomers (G-actin). Acts in a pH-independent manner. This chain is Destrin (DSTN), found in Gallus gallus (Chicken).